The following is a 373-amino-acid chain: Histone-lysine N-methyltransferase SETD7 (373 aa).

The tract at residues 1–20 (MDSDDDNMEEVVEGPLDEDD) is disordered. 3 MORN repeats span residues 36-58 (FEGH…DGST), 59-81 (LEGF…DGGA), and 106-128 (FRGR…DGAC). The SET domain occupies 214 to 336 (QRVYVGQSLI…KDEELTVAYG (123 aa)). Residues 226–228 (AGE), N296, and H297 each bind S-adenosyl-L-methionine.

It belongs to the class V-like SAM-binding methyltransferase superfamily. Histone-lysine methyltransferase family. SET7 subfamily.

Its subcellular location is the nucleus. It is found in the chromosome. It catalyses the reaction L-lysyl(4)-[histone H3] + S-adenosyl-L-methionine = N(6)-methyl-L-lysyl(4)-[histone H3] + S-adenosyl-L-homocysteine + H(+). The enzyme catalyses L-lysyl-[protein] + S-adenosyl-L-methionine = N(6)-methyl-L-lysyl-[protein] + S-adenosyl-L-homocysteine + H(+). Its function is as follows. Histone methyltransferase that specifically monomethylates 'Lys-4' of histone H3. H3 'Lys-4' methylation represents a specific tag for epigenetic transcriptional activation. Plays a central role in the transcriptional activation of genes. Also has methyltransferase activity toward non-histone proteins. The chain is Histone-lysine N-methyltransferase SETD7 (setd7) from Danio rerio (Zebrafish).